Here is a 432-residue protein sequence, read N- to C-terminus: RNA exonuclease 4 (432 aa).

The segment covering 42–54 has biased composition (basic residues); sequence ARKKAKKKFRKSK. The tract at residues 42–177 is disordered; that stretch reads ARKKAKKKFR…AKKRTYSDIS (136 aa). Residues 121–137 show a composition bias toward basic and acidic residues; sequence KASDKSKGDKQRTEKAK. Position 123 is a phosphoserine (S123). A Glycyl lysine isopeptide (Lys-Gly) (interchain with G-Cter in SUMO2) cross-link involves residue K127. The Exonuclease domain occupies 230–381; it reads KRLGQKKRTI…PSLKRLSEKI (152 aa).

This sequence belongs to the REXO4 family. In terms of assembly, can bind ESR1 and ESR2. This interaction is abrogated by estrogen and augmented by tamoxifen treatment.

The protein localises to the nucleus. It localises to the nucleolus. Its function is as follows. May function as an exonuclease. The polypeptide is RNA exonuclease 4 (Rexo4) (Mus musculus (Mouse)).